Reading from the N-terminus, the 427-residue chain is Imidazolonepropionase (427 aa).

The Fe(3+) site is built by His-81 and His-83. Zn(2+) contacts are provided by His-81 and His-83. Arg-90, Tyr-153, and His-186 together coordinate 4-imidazolone-5-propanoate. Tyr-153 provides a ligand contact to N-formimidoyl-L-glutamate. His-260 contacts Fe(3+). His-260 serves as a coordination point for Zn(2+). Glu-263 provides a ligand contact to 4-imidazolone-5-propanoate. A Fe(3+)-binding site is contributed by Asp-335. Asp-335 lines the Zn(2+) pocket. N-formimidoyl-L-glutamate contacts are provided by Asn-337 and Gly-339. Ser-340 lines the 4-imidazolone-5-propanoate pocket.

Belongs to the metallo-dependent hydrolases superfamily. HutI family. The cofactor is Zn(2+). Fe(3+) is required as a cofactor.

The protein localises to the cytoplasm. It catalyses the reaction 4-imidazolone-5-propanoate + H2O = N-formimidoyl-L-glutamate. It functions in the pathway amino-acid degradation; L-histidine degradation into L-glutamate; N-formimidoyl-L-glutamate from L-histidine: step 3/3. Catalyzes the hydrolytic cleavage of the carbon-nitrogen bond in imidazolone-5-propanoate to yield N-formimidoyl-L-glutamate. It is the third step in the universal histidine degradation pathway. The sequence is that of Imidazolonepropionase from Chloroflexus aggregans (strain MD-66 / DSM 9485).